The chain runs to 620 residues: MKLSTLFALVLLLQSTAILSLVAAEATTQYGGYLPPPVTSQPPPSSIGLSPPSAPTTTPPSRGHVPSPRHAPPRHAYPPPSHGHLPPSVGGPPPHRGHLPPSRGFNPPPSPVISPSHPPPSYGAPPPSHGPGHLPSHGQRPPSPSHGHAPPSGGHTPPRGQHPPSHRRPSPPSRHGHPPPPTYAQPPPTPIYSPSPQVQPPPTYSPPPPTHVQPTPSPPSRGHQPQPPTHRHAPPTHRHAPPTHQPSPLRHLPPSPRRQPQPPTYSPPPPAYAQSPQPSPTYSPPPPTYSPPPPSPIYSPPPPAYSPSPPPTPTPTFSPPPPAYSPPPTYSPPPPTYLPLPSSPIYSPPPPVYSPPPPPSYSPPPPTYLPPPPPSSPPPPSFSPPPPTYEQSPPPPPAYSPPLPAPPTYSPPPPTYSPPPPTYAQPPPLPPTYSPPPPAYSPPPPPTYSPPPPTYSPPPPAYAQPPPPPPTYSPPPPAYSPPPPSPIYSPPPPQVQPLPPTFSPPPPRRIHLPPPPHRQPRPPTPTYGQPPSPPTFSPPPPRQIHSPPPPHWQPRTPTPTYGQPPSPPTFSAPPPRQIHSPPPPHRQPRPPTPTYGQPPSPPTTYSPPSPPPYGLLLSTP.

The first 20 residues, 1–20, serve as a signal peptide directing secretion; the sequence is MKLSTLFALVLLLQSTAILS. Pro residues predominate over residues 34 to 45; the sequence is LPPPVTSQPPPS. The disordered stretch occupies residues 34-620; sequence LPPPVTSQPP…PPYGLLLSTP (587 aa). One copy of the H-A-P-P repeat lies at 70–73; it reads HAPP. Positions 106 to 129 are enriched in pro residues; sequence NPPPSPVISPSHPPPSYGAPPPSH. Over residues 145–163 the composition is skewed to low complexity; it reads SHGHAPPSGGHTPPRGQHP. The H-A-P-P repeat unit spans residues 148-151; it reads HAPP. Residues 164 to 177 show a composition bias toward basic residues; that stretch reads PSHRRPSPPSRHGH. Over residues 178–219 the composition is skewed to pro residues; sequence PPPPTYAQPPPTPIYSPSPQVQPPPTYSPPPPTHVQPTPSPP. Residues 205–620 are contains the Ser-Pro(4) repeats; that stretch reads SPPPPTHVQP…PPYGLLLSTP (416 aa). 2 consecutive repeat copies span residues 229 to 235 and 236 to 242. Over residues 229–241 the composition is skewed to basic residues; sequence THRHAPPTHRHAP. Positions 229 to 242 are 2 X 7 AA tandem repeats of T-H-R-H-A-P-P; it reads THRHAPPTHRHAPP. 2 stretches are compositionally biased toward pro residues: residues 251–552 and 562–613; these read HLPP…PPHW and GQPP…PPPY. The segment at 499–600 is 3 X approximate tandem repeats; sequence PPTFSPPPPR…PTPTYGQPPS (102 aa).

Post-translationally, hydroxylated on proline residues in the S-P-P-P-P repeat. In terms of processing, O-glycosylated on hydroxyprolines. In terms of tissue distribution, expressed in the tip of the emerging lateral roots.

It localises to the secreted. The protein localises to the primary cell wall. Functionally, has a specialized structural function, possibly in the mechanical penetration of the cortex and epidermis of the main root. The chain is Extensin (HRGPNT3) from Nicotiana tabacum (Common tobacco).